The chain runs to 304 residues: Sulfate adenylyltransferase subunit 2 (304 aa).

It belongs to the PAPS reductase family. CysD subfamily. As to quaternary structure, heterodimer composed of CysD, the smaller subunit, and CysNC.

The enzyme catalyses sulfate + ATP + H(+) = adenosine 5'-phosphosulfate + diphosphate. Its pathway is sulfur metabolism; hydrogen sulfide biosynthesis; sulfite from sulfate: step 1/3. In terms of biological role, with CysN forms the ATP sulfurylase (ATPS) that catalyzes the adenylation of sulfate producing adenosine 5'-phosphosulfate (APS) and diphosphate, the first enzymatic step in sulfur assimilation pathway. APS synthesis involves the formation of a high-energy phosphoric-sulfuric acid anhydride bond driven by GTP hydrolysis by CysN coupled to ATP hydrolysis by CysD. In Xylella fastidiosa (strain Temecula1 / ATCC 700964), this protein is Sulfate adenylyltransferase subunit 2.